The following is a 216-amino-acid chain: Guanylate kinase (216 aa).

In terms of domain architecture, Guanylate kinase-like spans 15–193; the sequence is GNLFMVVAPS…ALEELRNVVR (179 aa). 22–29 is a binding site for ATP; it reads APSGAGKS.

It belongs to the guanylate kinase family.

It localises to the cytoplasm. The catalysed reaction is GMP + ATP = GDP + ADP. Essential for recycling GMP and indirectly, cGMP. This chain is Guanylate kinase, found in Cupriavidus pinatubonensis (strain JMP 134 / LMG 1197) (Cupriavidus necator (strain JMP 134)).